Consider the following 101-residue polypeptide: Capsid assembly scaffolding protein (101 aa).

The tract at residues 1 to 24 (MPMERDSHEEILNKLNDPELEHSE) is disordered. The stretch at 79–99 (EEIKQEELSETITIEDLEKQA) forms a coiled coil.

It belongs to the phi29likevirus scaffolding protein family. As to quaternary structure, homodimer. Interacts non-specifically with DNA; probably binds DNA in the early stages of DNA packaging.

Scaffolding protein involved in the icosahedric procapsid assembly. Coassembles with the capsid proteins to form the procapsid. The scaffolding protein is found within the capsid as a serie of concentric shells. During DNA packaging, the scaffolding protein molecules are released from the procapsid. This Bacillus subtilis (Bacteriophage B103) protein is Capsid assembly scaffolding protein (7).